The chain runs to 130 residues: Large ribosomal subunit protein bL20 (130 aa).

Belongs to the bacterial ribosomal protein bL20 family.

Its function is as follows. Binds directly to 23S ribosomal RNA and is necessary for the in vitro assembly process of the 50S ribosomal subunit. It is not involved in the protein synthesizing functions of that subunit. This chain is Large ribosomal subunit protein bL20, found in Salinispora arenicola (strain CNS-205).